The following is a 517-amino-acid chain: Legumin A (517 aa).

The first 21 residues, 1-21, serve as a signal peptide directing secretion; the sequence is MAKLLALSLSFCFLLLGGCFA. 2 disulfides stabilise this stretch: Cys31–Cys64 and Cys107–Cys339. Positions 36 to 232 constitute a Cupin type-1 1 domain; it reads LDALEPDNRI…AFNVNRHIVD (197 aa). The disordered stretch occupies residues 249–335; sequence VKGGLSIISP…SRRQGDNGLE (87 aa). The region spanning 345–494 is the Cupin type-1 2 domain; it reads LNIGPSSSPD…TFNLQRNEAR (150 aa).

Belongs to the 11S seed storage protein (globulins) family. In terms of assembly, hexamer; each subunit is composed of an acidic and a basic chain derived from a single precursor and linked by a disulfide bond.

In terms of biological role, this protein found in the seeds of many leguminous and non-leguminous plants is the source of sulfur-containing amino acids in seed meals. The polypeptide is Legumin A (LEGA) (Pisum sativum (Garden pea)).